The chain runs to 306 residues: Putative HTH-type transcriptional regulatory protein Mhun_2548 (306 aa).

The 58-residue stretch at 132-189 (LRELRETRSLSLGDLGQILGVSRRTVAKYEAGMGTTIEIALRIEETFDSGVIEPIDLI) folds into the HTH cro/C1-type domain. The segment at residues 143 to 162 (LGDLGQILGVSRRTVAKYEA) is a DNA-binding region (H-T-H motif).

This is Putative HTH-type transcriptional regulatory protein Mhun_2548 from Methanospirillum hungatei JF-1 (strain ATCC 27890 / DSM 864 / NBRC 100397 / JF-1).